Here is a 739-residue protein sequence, read N- to C-terminus: Phosphoribosylformylglycinamidine synthase subunit PurL (739 aa).

Residue H54 is part of the active site. Residues Y57 and K96 each contribute to the ATP site. E98 lines the Mg(2+) pocket. Substrate-binding positions include 99-102 (SHNH) and R121. H100 functions as the Proton acceptor in the catalytic mechanism. D122 contacts Mg(2+). Q245 is a binding site for substrate. D273 provides a ligand contact to Mg(2+). Position 317-319 (317-319 (ESQ)) interacts with substrate. 2 residues coordinate ATP: D500 and G537. N538 contributes to the Mg(2+) binding site. Residue S540 coordinates substrate.

It belongs to the FGAMS family. As to quaternary structure, monomer. Part of the FGAM synthase complex composed of 1 PurL, 1 PurQ and 2 PurS subunits.

The protein localises to the cytoplasm. The enzyme catalyses N(2)-formyl-N(1)-(5-phospho-beta-D-ribosyl)glycinamide + L-glutamine + ATP + H2O = 2-formamido-N(1)-(5-O-phospho-beta-D-ribosyl)acetamidine + L-glutamate + ADP + phosphate + H(+). It participates in purine metabolism; IMP biosynthesis via de novo pathway; 5-amino-1-(5-phospho-D-ribosyl)imidazole from N(2)-formyl-N(1)-(5-phospho-D-ribosyl)glycinamide: step 1/2. Part of the phosphoribosylformylglycinamidine synthase complex involved in the purines biosynthetic pathway. Catalyzes the ATP-dependent conversion of formylglycinamide ribonucleotide (FGAR) and glutamine to yield formylglycinamidine ribonucleotide (FGAM) and glutamate. The FGAM synthase complex is composed of three subunits. PurQ produces an ammonia molecule by converting glutamine to glutamate. PurL transfers the ammonia molecule to FGAR to form FGAM in an ATP-dependent manner. PurS interacts with PurQ and PurL and is thought to assist in the transfer of the ammonia molecule from PurQ to PurL. This is Phosphoribosylformylglycinamidine synthase subunit PurL from Bacillus cereus (strain Q1).